We begin with the raw amino-acid sequence, 469 residues long: GTPase Der (469 aa).

EngA-type G domains are found at residues 3 to 166 (PVIA…PEDE) and 177 to 350 (LRLA…ESAN). GTP-binding positions include 9-16 (GRPNVGKS), 56-60 (DTGGI), 118-121 (NKVD), 183-190 (GRPNVGKS), 230-234 (DTAGV), and 295-298 (NKWD). Positions 351 to 435 (LKVSPAKLTQ…PVKIEFKTSE (85 aa)) constitute a KH-like domain.

The protein belongs to the TRAFAC class TrmE-Era-EngA-EngB-Septin-like GTPase superfamily. EngA (Der) GTPase family. As to quaternary structure, associates with the 50S ribosomal subunit.

Its function is as follows. GTPase that plays an essential role in the late steps of ribosome biogenesis. This Acinetobacter baumannii (strain ACICU) protein is GTPase Der.